A 220-amino-acid chain; its full sequence is Fructose-6-phosphate aldolase (220 aa).

The active-site Schiff-base intermediate with substrate is K85.

Belongs to the transaldolase family. Type 3A subfamily. In terms of assembly, homodecamer.

Its subcellular location is the cytoplasm. The catalysed reaction is beta-D-fructose 6-phosphate = dihydroxyacetone + D-glyceraldehyde 3-phosphate. Functionally, catalyzes the reversible formation of fructose 6-phosphate from dihydroxyacetone and D-glyceraldehyde 3-phosphate via an aldolization reaction. The protein is Fructose-6-phosphate aldolase of Salmonella arizonae (strain ATCC BAA-731 / CDC346-86 / RSK2980).